The sequence spans 529 residues: Bifunctional purine biosynthesis protein PurH (529 aa).

The MGS-like domain occupies 1-148; the sequence is MNNVRPIRRA…KNHKDTTIVV (148 aa).

Belongs to the PurH family.

It catalyses the reaction (6R)-10-formyltetrahydrofolate + 5-amino-1-(5-phospho-beta-D-ribosyl)imidazole-4-carboxamide = 5-formamido-1-(5-phospho-D-ribosyl)imidazole-4-carboxamide + (6S)-5,6,7,8-tetrahydrofolate. It carries out the reaction IMP + H2O = 5-formamido-1-(5-phospho-D-ribosyl)imidazole-4-carboxamide. It participates in purine metabolism; IMP biosynthesis via de novo pathway; 5-formamido-1-(5-phospho-D-ribosyl)imidazole-4-carboxamide from 5-amino-1-(5-phospho-D-ribosyl)imidazole-4-carboxamide (10-formyl THF route): step 1/1. The protein operates within purine metabolism; IMP biosynthesis via de novo pathway; IMP from 5-formamido-1-(5-phospho-D-ribosyl)imidazole-4-carboxamide: step 1/1. This chain is Bifunctional purine biosynthesis protein PurH, found in Shewanella frigidimarina (strain NCIMB 400).